Reading from the N-terminus, the 818-residue chain is MESEQLFHRGYYRNSYNSITSASSDEELLDGAGVIMDFQTSEDDNLLDGDTAVGTHYTMTNGGSINSSTHLLDLLDEPIPGVGTYDDFHTIDWVREKCKDRERHRRINSKKKESAWEMTKSLYDAWSGWLVVTLTGLASGALAGLIDIAADWMTDLKEGICLSALWYNHEQCCWGSNETTFEERDKCPQWKTWAELIIGQAEGPGSYIMNYIMYIFWALSFAFLAVSLVKVFAPYACGSGIPEIKTILSGFIIRGYLGKWTLMIKTITLVLAVASGLSLGKEGPLVHVACCCGNIFSYLFPKYSTNEAKKREVLSAASAAGVSVAFGAPIGGVLFSLEEVSYYFPLKTLWRSFFAALVAAFVLRSINPFGNSRLVLFYVEYHTPWYLFELFPFILLGVFGGLWGAFFIRANIAWCRRRKSTKFGKYPVLEVIIVAAITAVIAFPNPYTRLNTSELIKELFTDCGPLESSSLCDYRNDMNASKIVDDIPDRPAGIGVYSAIWQLCLALIFKIIMTVFTFGIKVPSGLFIPSMAIGAIAGRIVGIAVEQLAYYHHDWFIFKEWCEVGADCITPGLYAMVGAAACLGGVTRMTVSLVVIVFELTGGLEYIVPLMAAVMTSKWVGDAFGREGIYEAHIRLNGYPFLDAKEEFTHTTLAADVMRPRRNDPPLAVLTQDNMTVDDIENMINETSYNGFPVIMSKESQRLVGFALRRDLTIAIESARKKQEGIVGSSRVCFAQHTPSLPAESPRPLKLRSILDMSPFTVTDHTPMEIVVDIFRKLGLRQCLVTHNGRLLGIITKKDILRHMAQTANQDPASIMFN.

At 1 to 125 (MESEQLFHRG…WEMTKSLYDA (125 aa)) the chain is on the cytoplasmic side. 3 short sequence motifs (di-leucine internalization motif; mediates targeting to late endosome and lysosome membranes) span residues 28–29 (LL), 46–47 (LL), and 71–75 (LLDLL). A helical membrane pass occupies residues 126–163 (WSGWLVVTLTGLASGALAGLIDIAADWMTDLKEGICLS). N177 is a glycosylation site (N-linked (GlcNAc...) asparagine). A helical transmembrane segment spans residues 209-232 (MNYIMYIFWALSFAFLAVSLVKVF). The Selectivity filter part_1 signature appears at 238–242 (GSGIP). Residue S239 coordinates chloride. Residues 241-248 (IPEIKTIL) constitute an intramembrane region (helical). The next 2 helical transmembrane spans lie at 258-276 (GKWT…VASG) and 282-301 (EGPL…YLFP). Positions 280–284 (GKEGP) match the Selectivity filter part_2 motif. 2 intramembrane regions (helical) span residues 313–325 (VLSA…VSVA) and 329–337 (PIGGVLFSL). The next 3 membrane-spanning stretches (helical) occupy residues 349–367 (LWRS…RSIN), 391–416 (FPFI…AWCR), and 423–443 (FGKY…VIAF). Residues N451 and N479 are each glycosylated (N-linked (GlcNAc...) asparagine). The next 2 helical transmembrane spans lie at 500-520 (IWQL…TFGI) and 525-544 (GLFI…VGIA). The Selectivity filter part_3 signature appears at 525-529 (GLFIP). F527 is a binding site for chloride. 2 intramembrane regions (helical) span residues 572–586 (GLYA…LGGV) and 590–601 (TVSLVVIVFELT). Positions 602-605 (GGLE) form an intramembrane region, note=Loop between two helices. The helical transmembrane segment at 606-624 (YIVPLMAAVMTSKWVGDAF) threads the bilayer. The Cytoplasmic segment spans residues 625–818 (GREGIYEAHI…NQDPASIMFN (194 aa)). A chloride-binding site is contributed by Y630. CBS domains are found at residues 658 to 722 (MRPR…ARKK) and 755 to 812 (LDMS…NQDP). ATP is bound by residues 689-691 (YNG) and 796-799 (TKKD).

This sequence belongs to the chloride channel (TC 2.A.49) family. ClC-3/CLCN3 subfamily. Monomer and homodimer. Forms heterodimers with CLCN4. As to quaternary structure, interacts with GOPC, PDZK1 and NHERF1/EBP50. N-glycosylated. Expressed primarily in tissues derived from neuroectoderm. Within the brain, its expression is particularly evident in the hippocampus, olfactory cortex, and olfactory bulb. Highly expressed in aortic and coronary vascular smooth muscle cells, and aortic endothelial cells. Also expressed in tracheal and alveolar epithelial cells, and intima and media of the pulmonary vessels. Expressed in bronchus and colon (at protein level).

It is found in the early endosome membrane. The protein localises to the late endosome membrane. It localises to the lysosome membrane. The protein resides in the cell membrane. Its subcellular location is the golgi apparatus membrane. It is found in the cell projection. The protein localises to the ruffle membrane. Its function is as follows. Strongly outwardly rectifying, electrogenic H(+)/Cl(-)exchanger which mediates the exchange of chloride ions against protons. The CLC channel family contains both chloride channels and proton-coupled anion transporters that exchange chloride or another anion for protons. The presence of conserved gating glutamate residues is typical for family members that function as antiporters. In terms of biological role, strongly outwardly rectifying, electrogenic H(+)/Cl(-)exchanger which mediates the exchange of chloride ions against protons. The protein is H(+)/Cl(-) exchange transporter 3 (CLCN3) of Homo sapiens (Human).